The primary structure comprises 199 residues: Recombination protein RecR (199 aa).

A C4-type zinc finger spans residues 57-72 (CSSCRTFTEESLCPIC). The Toprim domain maps to 81-176 (DLICVVETPA…NVSRIAHGVP (96 aa)).

The protein belongs to the RecR family.

May play a role in DNA repair. It seems to be involved in an RecBC-independent recombinational process of DNA repair. It may act with RecF and RecO. In Shewanella loihica (strain ATCC BAA-1088 / PV-4), this protein is Recombination protein RecR.